Reading from the N-terminus, the 242-residue chain is Succinyl-CoA:3-ketoacid coenzyme A transferase subunit A (242 aa).

33-39 (GGFGLCG) lines the CoA pocket.

Belongs to the 3-oxoacid CoA-transferase subunit A family. Heterodimer of a subunit A and a subunit B.

The enzyme catalyses a 3-oxo acid + succinyl-CoA = a 3-oxoacyl-CoA + succinate. Its pathway is bacterial outer membrane biogenesis; lipopolysaccharide biosynthesis. The sequence is that of Succinyl-CoA:3-ketoacid coenzyme A transferase subunit A (lpsI) from Xanthomonas campestris pv. campestris (strain B100).